The chain runs to 225 residues: Uracil-DNA glycosylase (225 aa).

Aspartate 65 serves as the catalytic Proton acceptor.

Belongs to the uracil-DNA glycosylase (UDG) superfamily. UNG family.

It is found in the cytoplasm. It carries out the reaction Hydrolyzes single-stranded DNA or mismatched double-stranded DNA and polynucleotides, releasing free uracil.. Its function is as follows. Excises uracil residues from the DNA which can arise as a result of misincorporation of dUMP residues by DNA polymerase or due to deamination of cytosine. The sequence is that of Uracil-DNA glycosylase from Lysinibacillus sphaericus (strain C3-41).